Here is a 120-residue protein sequence, read N- to C-terminus: Putative cysteine proteinase inhibitor 11 (120 aa).

An N-terminal signal peptide occupies residues 1 to 24 (MARHPGLLLILLAAVAAVATTSRA). Positions 73-77 (QVVQG) match the Secondary area of contact motif.

Belongs to the cystatin family. Phytocystatin subfamily.

It is found in the secreted. Its function is as follows. Specific inhibitor of cysteine proteinases. Probably involved in the regulation of endogenous processes and in defense against pests and pathogens. The sequence is that of Putative cysteine proteinase inhibitor 11 from Oryza sativa subsp. japonica (Rice).